A 212-amino-acid polypeptide reads, in one-letter code: Cytidylate kinase (212 aa).

9–17 lines the ATP pocket; that stretch reads GPAAAGKGT.

It belongs to the cytidylate kinase family. Type 1 subfamily.

It is found in the cytoplasm. It carries out the reaction CMP + ATP = CDP + ADP. The catalysed reaction is dCMP + ATP = dCDP + ADP. This is Cytidylate kinase from Sinorhizobium medicae (strain WSM419) (Ensifer medicae).